Here is a 424-residue protein sequence, read N- to C-terminus: GTPase Obg (424 aa).

Residues Met-1 to Leu-158 enclose the Obg domain. One can recognise an OBG-type G domain in the interval Ala-159 to Ser-331. Residues Gly-165–Ser-172, Phe-190–Thr-194, Asp-212–Gly-215, Asn-282–Asp-285, and Ser-312–Ala-314 each bind GTP. Residues Ser-172 and Thr-192 each coordinate Mg(2+). The OCT domain maps to Arg-345–Lys-424.

The protein belongs to the TRAFAC class OBG-HflX-like GTPase superfamily. OBG GTPase family. Monomer. Mg(2+) is required as a cofactor.

It localises to the cytoplasm. In terms of biological role, an essential GTPase which binds GTP, GDP and possibly (p)ppGpp with moderate affinity, with high nucleotide exchange rates and a fairly low GTP hydrolysis rate. Plays a role in control of the cell cycle, stress response, ribosome biogenesis and in those bacteria that undergo differentiation, in morphogenesis control. The polypeptide is GTPase Obg (Clostridium acetobutylicum (strain ATCC 824 / DSM 792 / JCM 1419 / IAM 19013 / LMG 5710 / NBRC 13948 / NRRL B-527 / VKM B-1787 / 2291 / W)).